A 230-amino-acid chain; its full sequence is Probable septum site-determining protein MinC (230 aa).

The protein belongs to the MinC family. As to quaternary structure, interacts with MinD and FtsZ.

In terms of biological role, cell division inhibitor that blocks the formation of polar Z ring septums. Rapidly oscillates between the poles of the cell to destabilize FtsZ filaments that have formed before they mature into polar Z rings. Prevents FtsZ polymerization. The sequence is that of Probable septum site-determining protein MinC from Erwinia tasmaniensis (strain DSM 17950 / CFBP 7177 / CIP 109463 / NCPPB 4357 / Et1/99).